The chain runs to 151 residues: Homeobox protein HD-1 (151 aa).

Residues 87–146 constitute a DNA-binding region (homeobox); it reads ESIKSRRFPKFITEALERSFEIDQYPSEAEKARLAKICKLSTKQINNWFTNKRNRTKGHE.

It localises to the nucleus. The sequence is that of Homeobox protein HD-1 (HD-1) from Encephalitozoon cuniculi (strain GB-M1) (Microsporidian parasite).